Consider the following 976-residue polypeptide: Vacuolar membrane protease (976 aa).

Topologically, residues 1–51 (MPLSTGLTLSSLNVMEKADNHYNMMTKQPPALSPVDMVSSRRGFNPIAFTP) are cytoplasmic. A helical membrane pass occupies residues 52-72 (WPVTILSSLVYLAFIIPIIVV). Topologically, residues 73–399 (HHLVPPAPKE…DNGNDGKLNN (327 aa)) are vacuolar. N-linked (GlcNAc...) asparagine glycans are attached at residues N147 and N150. The Zn(2+) site is built by H206 and D218. The Proton acceptor role is filled by E252. Zn(2+)-binding residues include E253, E278, and H351. The chain crosses the membrane as a helical span at residues 400–420 (GAGTLGVWFDFYGSSFAVFEL). Residues 421 to 427 (NTLFGHS) are Cytoplasmic-facing. Residues 428 to 448 (VALLVVAPLLLIATCVTLYTL) traverse the membrane as a helical segment. Residues 449–477 (DKMYMFSMYTYLSESGGQVSLYGLRGLFR) lie on the Vacuolar side of the membrane. Residues 478–498 (FPLILGISTALTIGLAFLLMK) form a helical membrane-spanning segment. Topologically, residues 499 to 519 (ANPFIIYSSPYAVWNPSALHR) are cytoplasmic. The helical transmembrane segment at 520 to 540 (AYAFTWMFGMMWVLLVIATVY) threads the bilayer. The Vacuolar segment spans residues 541-550 (QKQHGIASSY). The helical transmembrane segment at 551–571 (FIVFYFAGVSIATWISYLELF) threads the bilayer. Residues 572 to 675 (GLPTTQDYAR…HRLEQRWSIN (104 aa)) lie on the Cytoplasmic side of the membrane. Residues 590 to 633 (TPSSDSRLLAPSADELPPSGSAAGHDFNPEDVEDEEPTESTSLL) form a disordered region. Over residues 618–627 (PEDVEDEEPT) the composition is skewed to acidic residues. The helical transmembrane segment at 676–696 (LISSAWILQFLFVAPIVIILL) threads the bilayer. Residues 697 to 718 (GQLGLFLTSATYQIGADGGSQL) are Vacuolar-facing. The helical transmembrane segment at 719–739 (VIYVGIAVLSVLILLPLFPFI) threads the bilayer. Over 740–745 (HRFTYH) the chain is Cytoplasmic. A helical membrane pass occupies residues 746–766 (IPTFLLFVLIGTLVYNLTAFP). Residues 767 to 976 (FSHSNRLKVA…LVEGSHSFKL (210 aa)) lie on the Vacuolar side of the membrane. An N-linked (GlcNAc...) asparagine glycan is attached at N848.

It belongs to the peptidase M28 family. Zn(2+) serves as cofactor.

Its subcellular location is the vacuole membrane. In terms of biological role, may be involved in vacuolar sorting and osmoregulation. The protein is Vacuolar membrane protease of Arthroderma otae (strain ATCC MYA-4605 / CBS 113480) (Microsporum canis).